Consider the following 186-residue polypeptide: UPF0398 protein BPUM_1952 (186 aa).

This sequence belongs to the UPF0398 family.

The sequence is that of UPF0398 protein BPUM_1952 from Bacillus pumilus (strain SAFR-032).